We begin with the raw amino-acid sequence, 1104 residues long: A disintegrin and metalloproteinase with thrombospondin motifs 10 (1104 aa).

The N-terminal stretch at 1 to 25 is a signal peptide; it reads MASACQILRWALALGLGLTFKVTHA. The propeptide occupies 26 to 233; that stretch reads FRSQDELLSS…SERGQLGLKR (208 aa). N-linked (GlcNAc...) asparagine glycosylation is found at Asn90 and Asn222. The region spanning 239-457 is the Peptidase M12B domain; the sequence is RYVETLVVAD…GLGLCLNNRP (219 aa). 11 disulfides stabilise this stretch: Cys315-Cys376, Cys351-Cys358, Cys370-Cys452, Cys409-Cys436, Cys479-Cys501, Cys490-Cys508, Cys496-Cys531, Cys521-Cys536, Cys559-Cys596, Cys563-Cys601, and Cys574-Cys586. Zn(2+) is bound at residue His392. Glu393 is an active-site residue. Residues His396 and His402 each contribute to the Zn(2+) site. A Disintegrin domain is found at 460–546; it reads QDFVYPTVAP…VPFGSRPEGV (87 aa). The TSP type-1 1 domain maps to 547 to 602; the sequence is DGAWGPWTPWGDCSRSCGGGVSSSSRHCDSPRPTIGGKYCLGERRRHRSCNTNDCP. The spacer stretch occupies residues 706-818; sequence ETIEGVFSPA…PALHYRFNAP (113 aa). N-linked (GlcNAc...) asparagine glycosylation is found at Asn740 and Asn795. TSP type-1 domains are found at residues 825 to 885, 888 to 943, 944 to 1003, and 1004 to 1058; these read PPYS…EPCP, WVVG…QGPM, CPPE…RRCP, and PARW…AKCD. Cystine bridges form between Cys837/Cys879, Cys841/Cys884, and Cys852/Cys866. N-linked (GlcNAc...) asparagine glycosylation occurs at Asn892. The 39-residue stretch at 1066–1104 folds into the PLAC domain; it reads GPEECKDVNKVAYCPLVLKFQFCSRAYFRQMCCKTCQGR.

Interacts with FBN1; this interaction promotes microfibrils assembly. Requires Zn(2+) as cofactor. In terms of processing, glycosylated. Can be O-fucosylated by POFUT2 on a serine or a threonine residue found within the consensus sequence C1-X(2)-(S/T)-C2-G of the TSP type-1 repeat domains where C1 and C2 are the first and second cysteine residue of the repeat, respectively. Fucosylated repeats can then be further glycosylated by the addition of a beta-1,3-glucose residue by the glucosyltransferase, B3GALTL. Fucosylation mediates the efficient secretion of ADAMTS family members. Can also be C-glycosylated with one or two mannose molecules on tryptophan residues within the consensus sequence W-X-X-W of the TPRs, and N-glycosylated. These other glycosylations can also facilitate secretion. Widely expressed in adult tissues.

It localises to the secreted. Its subcellular location is the extracellular space. It is found in the extracellular matrix. Metalloprotease that participate in microfibrils assembly. Microfibrils are extracellular matrix components occurring independently or along with elastin in the formation of elastic tissues. This Mus musculus (Mouse) protein is A disintegrin and metalloproteinase with thrombospondin motifs 10 (Adamts10).